The primary structure comprises 253 residues: Triosephosphate isomerase (253 aa).

A substrate-binding site is contributed by 9–11 (NWK). The active-site Electrophile is His-98. Glu-170 (proton acceptor) is an active-site residue. Substrate-binding positions include Gly-176, Ser-216, and 237 to 238 (GG).

It belongs to the triosephosphate isomerase family. In terms of assembly, homodimer.

Its subcellular location is the cytoplasm. The catalysed reaction is D-glyceraldehyde 3-phosphate = dihydroxyacetone phosphate. The protein operates within carbohydrate biosynthesis; gluconeogenesis. It functions in the pathway carbohydrate degradation; glycolysis; D-glyceraldehyde 3-phosphate from glycerone phosphate: step 1/1. Involved in the gluconeogenesis. Catalyzes stereospecifically the conversion of dihydroxyacetone phosphate (DHAP) to D-glyceraldehyde-3-phosphate (G3P). This is Triosephosphate isomerase from Amoebophilus asiaticus (strain 5a2).